The chain runs to 116 residues: Carbohydrate-binding protein AQN-3 (116 aa).

Residues Cys-9 and Cys-30 are joined by a disulfide bond. Positions 9 to 110 (CGGFLKNYSG…SSFNVYFYGI (102 aa)) constitute a CUB domain. Asn-50 is a glycosylation site (N-linked (GlcNAc...) asparagine). A disulfide bond links Cys-53 and Cys-74. His-85 is subject to Methylhistidine.

The protein belongs to the spermadhesin family. In terms of processing, the residue at position 85 was identified as a methylhistidine by mass spectrometry.

The protein resides in the secreted. Functionally, AQN proteins mediate the binding of boar spermatozoa to component(s) of the egg's zona pellucida by a carbohydrate-binding mechanism. AQN proteins are secretory components of the male accessory glands being coated to the sperm surface at the time of ejaculation. They possess as well heparin-, serine-protease-inhibitor-binding capability. The protein is Carbohydrate-binding protein AQN-3 of Sus scrofa (Pig).